A 254-amino-acid polypeptide reads, in one-letter code: Small ribosomal subunit protein mS40 (254 aa).

A mitochondrion-targeting transit peptide spans 1-33; it reads MAAPLRHTLLKLVPTLLRSSYVAQVPLQTLCTR. S47 is subject to Phosphoserine. The segment at 218-254 is disordered; sequence YQGNLLEESGPPPESMPEMPTTPPAESSIEQPGSQSA. The segment covering 227–240 has biased composition (pro residues); that stretch reads GPPPESMPEMPTTP.

The protein belongs to the bacterial ribosomal protein bS18 family. Mitochondrion-specific ribosomal protein mS40 subfamily. Component of the mitochondrial ribosome small subunit (28S) which comprises a 12S rRNA and about 30 distinct proteins.

It localises to the mitochondrion. The protein is Small ribosomal subunit protein mS40 (Mrps18b) of Mus musculus (Mouse).